Here is a 487-residue protein sequence, read N- to C-terminus: 3-octaprenyl-4-hydroxybenzoate carboxy-lyase (487 aa).

Asn172 is a binding site for Mn(2+). Prenylated FMN is bound by residues 175–177 (IYR), 189–191 (RWL), and 194–195 (RG). Glu238 is a Mn(2+) binding site. Asp287 (proton donor) is an active-site residue.

This sequence belongs to the UbiD family. Homohexamer. Requires prenylated FMN as cofactor. Mn(2+) serves as cofactor.

It is found in the cell membrane. The catalysed reaction is a 4-hydroxy-3-(all-trans-polyprenyl)benzoate + H(+) = a 2-(all-trans-polyprenyl)phenol + CO2. It participates in cofactor biosynthesis; ubiquinone biosynthesis. Functionally, catalyzes the decarboxylation of 3-octaprenyl-4-hydroxy benzoate to 2-octaprenylphenol, an intermediate step in ubiquinone biosynthesis. This is 3-octaprenyl-4-hydroxybenzoate carboxy-lyase from Nitrosococcus oceani (strain ATCC 19707 / BCRC 17464 / JCM 30415 / NCIMB 11848 / C-107).